Consider the following 517-residue polypeptide: MHSLLVLFVSLLALGALKKHLDFRAAVDKIHNYPGLRFIFGVQSFIFGKRIPYFAAGGLSLWDTKHQDFVDHDADIISSVNIFPTCATYMIADAQAIKEITTNRARFPKPLQQYKILTFFGSNIVVTEADEWKRHRKISAPSFSERNNRLVWDETINIVKELSDDVWRGKNEVTMDNIVDLTVPIALFVIGVAGFGRRMSWVEDFTVPAGHSMPFKDALHLVSNHLWMKVLLPAWFLRSAPIPRVRKFHTAYEDLEKYMIEMIQARKTAEKKEERYDLFSSLLDANEEETDGNTKLSDSELMGNIFIYLIAGHETTAHTLAFTFILLALYQDEQEKLYQHIKSVVPDDRLPAYEEMGKLTYCYAMLLETLRMFPPVNLIPKQAAEDTTLHTSNMAGEPVAVPCLAGTALAIHTPGLHYNPRYWEDPFAFKPARFLGDWPRDAFLPFSAGPRSCLGRRFSETEAVAVLTYIVARWRIDVKEEPQFAGETFEQRKARLLDSKSAITLYPVRAPLVFKRR.

Residues 3 to 23 (SLLVLFVSLLALGALKKHLDF) form a helical membrane-spanning segment. Residue C453 participates in heme binding.

This sequence belongs to the cytochrome P450 family. The cofactor is heme.

It is found in the membrane. Its pathway is secondary metabolite biosynthesis. Functionally, cytochrome P450 monooxygenase that is able to use trans-stilbene as a substrate for oxidation. The chain is Cytochrome P450 monooxygenase 124 from Postia placenta (strain ATCC 44394 / Madison 698-R) (Brown rot fungus).